The following is a 335-amino-acid chain: Beta-ketoacyl-[acyl-carrier-protein] synthase III 3 (335 aa).

Catalysis depends on residues Cys114 and His256. Residues 257-261 are ACP-binding; sequence QANHR. Asn286 is a catalytic residue.

This sequence belongs to the thiolase-like superfamily. FabH family. In terms of assembly, homodimer.

Its subcellular location is the cytoplasm. The catalysed reaction is malonyl-[ACP] + acetyl-CoA + H(+) = 3-oxobutanoyl-[ACP] + CO2 + CoA. It participates in lipid metabolism; fatty acid biosynthesis. Its function is as follows. Catalyzes the condensation reaction of fatty acid synthesis by the addition to an acyl acceptor of two carbons from malonyl-ACP. Catalyzes the first condensation reaction which initiates fatty acid synthesis and may therefore play a role in governing the total rate of fatty acid production. Possesses both acetoacetyl-ACP synthase and acetyl transacylase activities. Its substrate specificity determines the biosynthesis of branched-chain and/or straight-chain of fatty acids. This Streptomyces coelicolor (strain ATCC BAA-471 / A3(2) / M145) protein is Beta-ketoacyl-[acyl-carrier-protein] synthase III 3.